An 89-amino-acid polypeptide reads, in one-letter code: Small ribosomal subunit protein uS15 (89 aa).

The protein belongs to the universal ribosomal protein uS15 family. Part of the 30S ribosomal subunit. Forms a bridge to the 50S subunit in the 70S ribosome, contacting the 23S rRNA.

Its function is as follows. One of the primary rRNA binding proteins, it binds directly to 16S rRNA where it helps nucleate assembly of the platform of the 30S subunit by binding and bridging several RNA helices of the 16S rRNA. Functionally, forms an intersubunit bridge (bridge B4) with the 23S rRNA of the 50S subunit in the ribosome. The polypeptide is Small ribosomal subunit protein uS15 (Thermodesulfovibrio yellowstonii (strain ATCC 51303 / DSM 11347 / YP87)).